The following is a 107-amino-acid chain: Ig kappa chain V-VI region NQ2-17.4.1 (107 aa).

The tract at residues 1-23 (QIVLTQSPAIMSASPGQKVTMTC) is framework-1. Cysteines 23 and 87 form a disulfide. Residues 24 to 33 (SASSSVSYMH) are complementarity-determining-1. The segment at 34 to 48 (WYQQKSGTSPKRWIY) is framework-2. The segment at 49–55 (DTSKLAS) is complementarity-determining-2. The tract at residues 56-87 (GVPARFSGSGSATSYSLTITSMQAEDAATYYC) is framework-3. Residues 88-96 (QQWSSNPLT) are complementarity-determining-3. The segment at 97-106 (FGAGTKLELK) is framework-4.

Functionally, anti-2-phenyl oxazolone (PHOX) Antibody. This is Ig kappa chain V-VI region NQ2-17.4.1 from Mus musculus (Mouse).